The chain runs to 686 residues: Envelope glycoprotein H (686 aa).

The signal sequence occupies residues M1–A24. Residues A25–P646 lie on the Virion surface side of the membrane. N-linked (GlcNAc...) asparagine; by host glycosylation is found at N77, N162, N542, N604, and N627. Residues P157 to T217 form an interaction with gL region. A helical transmembrane segment spans residues A647 to F667. Over K668 to S686 the chain is Intravirion.

It belongs to the herpesviridae glycoprotein H family. Interacts with glycoprotein L (gL); this interaction is necessary for the correct processing and cell surface expression of gH. The heterodimer gH/gL seems to interact with gB trimers during fusion. N-glycosylated, O-glycosylated, and sialylated.

The protein resides in the virion membrane. It localises to the host cell membrane. The protein localises to the host endosome membrane. Functionally, the heterodimer glycoprotein H-glycoprotein L is required for the fusion of viral and plasma membranes leading to virus entry into the host cell. Following initial binding to host receptor, membrane fusion is mediated by the fusion machinery composed of gB and the heterodimer gH/gL. May also be involved in the fusion between the virion envelope and the outer nuclear membrane during virion morphogenesis. This chain is Envelope glycoprotein H, found in Sus scrofa (Pig).